A 196-amino-acid chain; its full sequence is Pyridoxal 5'-phosphate synthase subunit PdxT (196 aa).

Residue 46 to 48 (GES) participates in L-glutamine binding. Cys78 functions as the Nucleophile in the catalytic mechanism. Residues Arg105 and 134–135 (IR) contribute to the L-glutamine site. Active-site charge relay system residues include His170 and Glu172.

Belongs to the glutaminase PdxT/SNO family. In terms of assembly, in the presence of PdxS, forms a dodecamer of heterodimers. Only shows activity in the heterodimer.

It carries out the reaction aldehydo-D-ribose 5-phosphate + D-glyceraldehyde 3-phosphate + L-glutamine = pyridoxal 5'-phosphate + L-glutamate + phosphate + 3 H2O + H(+). The enzyme catalyses L-glutamine + H2O = L-glutamate + NH4(+). The protein operates within cofactor biosynthesis; pyridoxal 5'-phosphate biosynthesis. Its function is as follows. Catalyzes the hydrolysis of glutamine to glutamate and ammonia as part of the biosynthesis of pyridoxal 5'-phosphate. The resulting ammonia molecule is channeled to the active site of PdxS. The protein is Pyridoxal 5'-phosphate synthase subunit PdxT of Pelotomaculum thermopropionicum (strain DSM 13744 / JCM 10971 / SI).